The following is a 390-amino-acid chain: Formate-dependent phosphoribosylglycinamide formyltransferase (390 aa).

Residues 14–15 (EL) and glutamate 74 contribute to the N(1)-(5-phospho-beta-D-ribosyl)glycinamide site. ATP is bound by residues arginine 106, lysine 147, 152-157 (SSGKGQ), 187-190 (EQFI), and glutamate 195. In terms of domain architecture, ATP-grasp spans 111–304 (DLAAQELGIT…EFDLHARAIM (194 aa)). The Mg(2+) site is built by glutamate 263 and glutamate 275. N(1)-(5-phospho-beta-D-ribosyl)glycinamide-binding positions include aspartate 282, lysine 351, and 358-359 (RR).

Belongs to the PurK/PurT family. In terms of assembly, homodimer.

It carries out the reaction N(1)-(5-phospho-beta-D-ribosyl)glycinamide + formate + ATP = N(2)-formyl-N(1)-(5-phospho-beta-D-ribosyl)glycinamide + ADP + phosphate + H(+). It functions in the pathway purine metabolism; IMP biosynthesis via de novo pathway; N(2)-formyl-N(1)-(5-phospho-D-ribosyl)glycinamide from N(1)-(5-phospho-D-ribosyl)glycinamide (formate route): step 1/1. Involved in the de novo purine biosynthesis. Catalyzes the transfer of formate to 5-phospho-ribosyl-glycinamide (GAR), producing 5-phospho-ribosyl-N-formylglycinamide (FGAR). Formate is provided by PurU via hydrolysis of 10-formyl-tetrahydrofolate. This is Formate-dependent phosphoribosylglycinamide formyltransferase from Erythrobacter litoralis (strain HTCC2594).